Consider the following 72-residue polypeptide: Palustrin-2CG1 (72 aa).

Residues Met1–Cys22 form the signal peptide. A propeptide spans Gln23 to Val39 (removed in mature form). A disulfide bond links Cys64 and Cys70.

In terms of tissue distribution, expressed by the skin glands.

The protein resides in the secreted. In terms of biological role, antimicrobial peptide active against a variety of Gram-positive and some Gram-negative bacterial strains. Has antifungal activity against a slime mold isolate. Has hemolytic activity against human erythrocytes. The polypeptide is Palustrin-2CG1 (Amolops chunganensis (Chungan torrent frog)).